The following is a 466-amino-acid chain: Cysteine--tRNA ligase (466 aa).

Cysteine 29 contributes to the Zn(2+) binding site. Residues 31–41 carry the 'HIGH' region motif; it reads ATVQAPPHIGH. The Zn(2+) site is built by cysteine 211, histidine 236, and glutamate 240. The 'KMSKS' region signature appears at 267–271; the sequence is KMSKS. Lysine 270 contributes to the ATP binding site.

Belongs to the class-I aminoacyl-tRNA synthetase family. Monomer. It depends on Zn(2+) as a cofactor.

Its subcellular location is the cytoplasm. It catalyses the reaction tRNA(Cys) + L-cysteine + ATP = L-cysteinyl-tRNA(Cys) + AMP + diphosphate. This chain is Cysteine--tRNA ligase, found in Thermobifida fusca (strain YX).